The sequence spans 185 residues: Ribosome-recycling factor (185 aa).

The protein belongs to the RRF family.

The protein resides in the cytoplasm. Its function is as follows. Responsible for the release of ribosomes from messenger RNA at the termination of protein biosynthesis. May increase the efficiency of translation by recycling ribosomes from one round of translation to another. The protein is Ribosome-recycling factor of Thermus thermophilus (strain ATCC BAA-163 / DSM 7039 / HB27).